The chain runs to 173 residues: uncharacterized protein (173 aa).

A helical membrane pass occupies residues 1-21 (MFIVFYLILIIFIFIYFHVYI).

This sequence to T.pallidum TP0711.

It is found in the membrane. This is an uncharacterized protein from Borreliella burgdorferi (strain ATCC 35210 / DSM 4680 / CIP 102532 / B31) (Borrelia burgdorferi).